The primary structure comprises 621 residues: Glutathione-regulated potassium-efflux system protein KefC (621 aa).

12 consecutive transmembrane segments (helical) span residues 4–24, 26–46, 54–74, 90–110, 114–134, 149–169, 178–198, 218–238, 270–290, 294–314, 326–346, and 359–379; these read HTLI…PIAV, LGLG…PWGL, AILH…GLEL, GALQ…LLGL, VAEL…MQAM, FAVL…IPLL, LVAF…VVAL, VFSA…EEVG, GLLL…GTLV, LRIV…LWLI, RWFA…FGAA, and ALTL…VLLT. In terms of domain architecture, RCK N-terminal spans 399-518; that stretch reads QPRVIVAGFG…AGVEAPERET (120 aa). Residues 598 to 621 form a disordered region; that stretch reads GWQGTEEGRHTGDIADEPENKPSA.

It belongs to the monovalent cation:proton antiporter 2 (CPA2) transporter (TC 2.A.37) family. KefC subfamily. Homodimer. Interacts with the regulatory subunit KefF.

Its subcellular location is the cell inner membrane. Its function is as follows. Pore-forming subunit of a potassium efflux system that confers protection against electrophiles. Catalyzes K(+)/H(+) antiport. The polypeptide is Glutathione-regulated potassium-efflux system protein KefC (Klebsiella pneumoniae (strain 342)).